We begin with the raw amino-acid sequence, 870 residues long: Translation initiation factor IF-2 (870 aa).

The interval 49–284 (SFQNSAPAEK…TKRKERPLPE (236 aa)) is disordered. 2 stretches are compositionally biased toward basic and acidic residues: residues 70–81 (RKNEKKQEDNAG) and 94–109 (QNNDRNHKNRNDRDHS). Residues 116 to 127 (KPKAAALLQQFK) are compositionally biased toward low complexity. Basic and acidic residues-rich tracts occupy residues 144–159 (AKKEYHEQLKYPKKEQ) and 168–183 (NKESNNKKSEEVEKKV). Residues 254–279 (RKRRKNKNKKRKQEQKPKKQITKRKE) are compositionally biased toward basic residues. Residues 371-540 (KRPPVVTIMG…LLQADMMELK (170 aa)) enclose the tr-type G domain. Positions 380 to 387 (GHVDHGKT) are G1. GTP is bound at residue 380 to 387 (GHVDHGKT). The interval 405–409 (GITQK) is G2. Residues 426-429 (DTPG) are G3. GTP is bound by residues 426-430 (DTPGH) and 480-483 (NKMD). Residues 480–483 (NKMD) are G4. The tract at residues 516-518 (SAR) is G5.

This sequence belongs to the TRAFAC class translation factor GTPase superfamily. Classic translation factor GTPase family. IF-2 subfamily.

It localises to the cytoplasm. In terms of biological role, one of the essential components for the initiation of protein synthesis. Protects formylmethionyl-tRNA from spontaneous hydrolysis and promotes its binding to the 30S ribosomal subunits. Also involved in the hydrolysis of GTP during the formation of the 70S ribosomal complex. This is Translation initiation factor IF-2 from Lactobacillus helveticus (strain DPC 4571).